Reading from the N-terminus, the 499-residue chain is Alpha-internexin (499 aa).

Residues 1 to 87 (MSFGSEHYLC…SQAAARTNEY (87 aa)) are head. Position 72 is a phosphoserine (serine 72). The segment at 88-129 (KIIRTNEKEQLQGLNDRFAVFIEKVHQLETQNRALEAELAAL) is coil 1A. In terms of domain architecture, IF rod spans 94–407 (EKEQLQGLND…KLLEGEETRF (314 aa)). The interval 130–142 (RQRHAEPSRVGEL) is linker 1. Residues 143–238 (FQRELRDLRA…QVHDEEVAEL (96 aa)) are coil 1B. Serine 219 carries the post-translational modification Phosphoserine. The linker 2 stretch occupies residues 239–262 (LATLQASSQAAAEVDVTVAKPDLT). The coil 2 stretch occupies residues 263 to 408 (SALREIRAQY…LLEGEETRFS (146 aa)). The residue at position 290 (lysine 290) is an N6-acetyllysine. Serine 335 carries the phosphoserine modification. The interval 409 to 499 (TSGLSISGLN…EETTISSQKI (91 aa)) is tail. The disordered stretch occupies residues 441 to 466 (STGLSLKKEEEEEEASKVASKKTSQI). Phosphoserine is present on residues serine 469 and serine 496.

The protein belongs to the intermediate filament family. Forms homodimers (in vitro). Forms heterodimers with NEFL, NEFM or NEFH (in vitro). Post-translationally, O-glycosylated. Found predominantly in adult CNS.

Functionally, class-IV neuronal intermediate filament that is able to self-assemble. It is involved in the morphogenesis of neurons. It may form an independent structural network without the involvement of other neurofilaments or it may cooperate with NEFL to form the filamentous backbone to which NEFM and NEFH attach to form the cross-bridges. May also cooperate with the neuronal intermediate filament protein PRPH to form filamentous networks. The protein is Alpha-internexin (INA) of Homo sapiens (Human).